The chain runs to 1068 residues: Phosphatidylinositol 4,5-bisphosphate 3-kinase catalytic subunit alpha isoform (1068 aa).

The PI3K-ABD domain maps to 16–105 (MPPRILVECL…QPFLKVIEPV (90 aa)). The PI3K-RBD domain maps to 187–289 (KGQIIVVIWV…GRMPNLMLMA (103 aa)). The 158-residue stretch at 330–487 (INSALRIKIL…DWFSSVVKFP (158 aa)) folds into the C2 PI3K-type domain. A PIK helical domain is found at 517–694 (LARDNELREN…GLLLESYCRA (178 aa)). The region spanning 765-1051 (RLEECRIMSS…QMNDAHHGGW (287 aa)) is the PI3K/PI4K catalytic domain. Residues 771–777 (IMSSAKR) form a G-loop region. The catalytic loop stretch occupies residues 912 to 920 (GIGDRHNSN). The interval 931-957 (HIDFGHFLDHKKKKFGYKRERVPFVLT) is activation loop.

It belongs to the PI3/PI4-kinase family. Heterodimer of a catalytic subunit PIK3CA and a p85 regulatory subunit (PIK3R1, PIK3R2 or PIK3R3). Interacts with IRS1 in nuclear extracts. Interacts with RUFY3. Interacts with RASD2. Interacts with APPL1. Interacts with HRAS and KRAS. Interaction with HRAS/KRAS is required for PI3K pathway signaling and cell proliferation stimulated by EGF and FGF2. Interacts with FAM83B; activates the PI3K/AKT signaling cascade.

It catalyses the reaction a 1,2-diacyl-sn-glycero-3-phospho-(1D-myo-inositol-4,5-bisphosphate) + ATP = a 1,2-diacyl-sn-glycero-3-phospho-(1D-myo-inositol-3,4,5-trisphosphate) + ADP + H(+). The enzyme catalyses a 1,2-diacyl-sn-glycero-3-phospho-(1D-myo-inositol) + ATP = a 1,2-diacyl-sn-glycero-3-phospho-(1D-myo-inositol-3-phosphate) + ADP + H(+). It carries out the reaction L-seryl-[protein] + ATP = O-phospho-L-seryl-[protein] + ADP + H(+). The catalysed reaction is 1,2-dioctanoyl-sn-glycero-3-phospho-(1D-myo-inositol-4,5-bisphosphate) + ATP = 1,2-dioctanoyl-sn-glycero-3-phospho-(1D-myo-inositol-3,4,5-trisphosphate) + ADP + H(+). It catalyses the reaction 1-octadecanoyl-2-(5Z,8Z,11Z,14Z)-eicosatetraenoyl-sn-glycero-3-phospho-1D-myo-inositol 4,5-bisphosphate + ATP = 1-octadecanoyl-2-(5Z,8Z,11Z,14Z-eicosatetraenoyl)-sn-glycero-3-phospho-(1D-myo-inositol 3,4,5-triphosphate) + ADP + H(+). It functions in the pathway phospholipid metabolism; phosphatidylinositol phosphate biosynthesis. Phosphoinositide-3-kinase (PI3K) phosphorylates phosphatidylinositol (PI) and its phosphorylated derivatives at position 3 of the inositol ring to produce 3-phosphoinositides. Uses ATP and PtdIns(4,5)P2 (phosphatidylinositol 4,5-bisphosphate) to generate phosphatidylinositol 3,4,5-trisphosphate (PIP3). PIP3 plays a key role by recruiting PH domain-containing proteins to the membrane, including AKT1 and PDPK1, activating signaling cascades involved in cell growth, survival, proliferation, motility and morphology. Participates in cellular signaling in response to various growth factors. Involved in the activation of AKT1 upon stimulation by receptor tyrosine kinases ligands such as EGF, insulin, IGF1, VEGFA and PDGF. Involved in signaling via insulin-receptor substrate (IRS) proteins. Essential in endothelial cell migration during vascular development through VEGFA signaling, possibly by regulating RhoA activity. Required for lymphatic vasculature development, possibly by binding to RAS and by activation by EGF and FGF2, but not by PDGF. Regulates invadopodia formation through the PDPK1-AKT1 pathway. Participates in cardiomyogenesis in embryonic stem cells through a AKT1 pathway. Participates in vasculogenesis in embryonic stem cells through PDK1 and protein kinase C pathway. Also has serine-protein kinase activity: phosphorylates PIK3R1 (p85alpha regulatory subunit), EIF4EBP1 and HRAS. Plays a role in the positive regulation of phagocytosis and pinocytosis. The protein is Phosphatidylinositol 4,5-bisphosphate 3-kinase catalytic subunit alpha isoform (Pik3ca) of Mus musculus (Mouse).